A 99-amino-acid chain; its full sequence is CTP synthase (99 aa).

The Glutamine amidotransferase type-1 domain occupies 1–99 (TMVTKLEKDS…FIKAIIENNK (99 aa)). Residue Arg28 participates in L-glutamine binding. Residues His73 and Glu75 contribute to the active site.

Belongs to the CTP synthase family. Homotetramer.

It catalyses the reaction UTP + L-glutamine + ATP + H2O = CTP + L-glutamate + ADP + phosphate + 2 H(+). The enzyme catalyses L-glutamine + H2O = L-glutamate + NH4(+). The catalysed reaction is UTP + NH4(+) + ATP = CTP + ADP + phosphate + 2 H(+). Its pathway is pyrimidine metabolism; CTP biosynthesis via de novo pathway; CTP from UDP: step 2/2. Allosterically activated by GTP, when glutamine is the substrate; GTP has no effect on the reaction when ammonia is the substrate. The allosteric effector GTP functions by stabilizing the protein conformation that binds the tetrahedral intermediate(s) formed during glutamine hydrolysis. Inhibited by the product CTP, via allosteric rather than competitive inhibition. Functionally, catalyzes the ATP-dependent amination of UTP to CTP with either L-glutamine or ammonia as the source of nitrogen. Regulates intracellular CTP levels through interactions with the four ribonucleotide triphosphates. The protein is CTP synthase of Mycoplasma capricolum subsp. capripneumoniae.